We begin with the raw amino-acid sequence, 538 residues long: Syncytin-2 (538 aa).

Positions 1 to 15 are cleaved as a signal peptide; sequence MGLLLLVLILTPSLA. Over 16–478 the chain is Extracellular; it reads AYRHPDFPLL…GWLNWEGTWK (463 aa). The CXXC signature appears at 43–46; sequence CWLC. Intrachain disulfides connect Cys43-Cys46, Cys43-Cys439, and Cys431-Cys438. N-linked (GlcNAc...) asparagine glycans are attached at residues Asn133, Asn146, Asn177, Asn220, Asn241, Asn247, Asn312, and Asn332. The fusion peptide stretch occupies residues 354 to 374; it reads FIPLLAGLGILAGTGTGIAGI. Positions 414-430 match the CKS-17 motif; the sequence is LQNRRGLDMLTAAQGGI. The short motif at 431 to 439 is the CX6CC element; the sequence is CLALDEKCC. An N-linked (GlcNAc...) asparagine glycan is attached at Asn443. A helical transmembrane segment spans residues 479–499; that stretch reads WFSWVLPLTGPLVSLLLLLLF. Residues 500-538 lie on the Cytoplasmic side of the membrane; that stretch reads GPCLLNLITQFVSSRLQAIKLQTNLSAGRRPRNIQESPF.

Belongs to the gamma type-C retroviral envelope protein family. HERV class-I FRD env subfamily. As to quaternary structure, the surface and transmembrane proteins form a heterodimer. They are attached by non-covalent interactions or by a labile interchain disulfide bond. In terms of processing, specific enzymatic cleavages in vivo yield the mature SU and TM proteins. The CXXC motif is highly conserved across a broad range of retroviral envelope proteins. It is thought to participate in the formation of a labile disulfide bond possibly with the CX6CC motif present in the transmembrane protein.

The protein localises to the virion. It is found in the cell membrane. Its function is as follows. This endogenous retroviral envelope protein has retained its original fusogenic properties and participates in trophoblast fusion and the formation of a syncytium during placenta morphogenesis. The interaction with MFSD2A is apparently important for this process. Endogenous envelope proteins may have kept, lost or modified their original function during evolution but this one can still make pseudotypes with MLV, HIV-1 or SIV-1 virions and confer infectivity. Retroviral envelope proteins mediate receptor recognition and membrane fusion during early infection. The surface protein mediates receptor recognition, while the transmembrane protein anchors the envelope heterodimer to the viral membrane through one transmembrane domain. The other hydrophobic domain, called fusion peptide, mediates fusion of the viral membrane with the target cell membrane. The protein is Syncytin-2 (ERVFRD-1) of Gorilla gorilla gorilla (Western lowland gorilla).